The primary structure comprises 434 residues: Trigger factor (434 aa).

Residues glutamate 161 to proline 246 enclose the PPIase FKBP-type domain.

This sequence belongs to the FKBP-type PPIase family. Tig subfamily.

It is found in the cytoplasm. It carries out the reaction [protein]-peptidylproline (omega=180) = [protein]-peptidylproline (omega=0). Functionally, involved in protein export. Acts as a chaperone by maintaining the newly synthesized protein in an open conformation. Functions as a peptidyl-prolyl cis-trans isomerase. The chain is Trigger factor from Dechloromonas aromatica (strain RCB).